A 575-amino-acid polypeptide reads, in one-letter code: Electron transfer flavoprotein-ubiquinone oxidoreductase, mitochondrial (575 aa).

Residues 1–33 (MQRVLRAAAAGIGHASGHRAPRWGAAAAAARWL) constitute a mitochondrion transit peptide. 44–58 (VVVVGAGPAGLAAAI) is a binding site for FAD. The stretch at 82-103 (VGAHVLSGNVFEPRALDELIPK) is an intramembrane region. Residues Gly276 and Gly277 each contribute to the a ubiquinone site. Residues 343-363 (IPNPVFPGGAIIGCSAGFLNV) lie within the membrane without spanning it. Positions 520, 544, 547, and 550 each coordinate [4Fe-4S] cluster. In terms of domain architecture, 4Fe-4S ferredoxin-type spans 535–564 (QKLHINAQNCLHCKACDIKDPKQNIEWTVP).

Belongs to the ETF-QO/FixC family. The cofactor is [4Fe-4S] cluster. FAD serves as cofactor.

The protein localises to the mitochondrion inner membrane. It carries out the reaction a ubiquinone + reduced [electron-transfer flavoprotein] = a ubiquinol + oxidized [electron-transfer flavoprotein] + H(+). Functionally, accepts electrons from ETF and reduces ubiquinone. This Oryza sativa subsp. japonica (Rice) protein is Electron transfer flavoprotein-ubiquinone oxidoreductase, mitochondrial.